A 507-amino-acid polypeptide reads, in one-letter code: ATP synthase subunit alpha, chloroplastic (507 aa).

An ATP-binding site is contributed by 170–177 (GDRQTGKT).

The protein belongs to the ATPase alpha/beta chains family. In terms of assembly, F-type ATPases have 2 components, CF(1) - the catalytic core - and CF(0) - the membrane proton channel. CF(1) has five subunits: alpha(3), beta(3), gamma(1), delta(1), epsilon(1). CF(0) has four main subunits: a, b, b' and c.

The protein localises to the plastid. The protein resides in the chloroplast thylakoid membrane. The enzyme catalyses ATP + H2O + 4 H(+)(in) = ADP + phosphate + 5 H(+)(out). Produces ATP from ADP in the presence of a proton gradient across the membrane. The alpha chain is a regulatory subunit. The polypeptide is ATP synthase subunit alpha, chloroplastic (Pelargonium hortorum (Common geranium)).